The primary structure comprises 353 residues: Stomatin-like protein 2, mitochondrial (353 aa).

A mitochondrion-targeting transit peptide spans Met-1 to Ala-28. Ser-17 bears the Phosphoserine; by PKC/PRKCZ mark. Tyr-124 carries the phosphotyrosine modification. Lys-145 bears the N6-acetyllysine; alternate mark. Lys-145 is subject to N6-succinyllysine; alternate. A coiled-coil region spans residues Ile-215–Lys-252. At Lys-233 the chain carries N6-acetyllysine. Residues Val-324 to Ser-353 are disordered. The residue at position 330 (Ser-330) is a Phosphoserine.

The protein belongs to the band 7/mec-2 family. Forms homooligomers. Interacts with MFN2; may form heterooligomers. Interacts with PHB1 and PHB2; recruits them to cardiolipin-enriched mitochondrial membranes and stabilizes them. Interacts with CACNA2D2.

The protein resides in the cell membrane. Its subcellular location is the mitochondrion. It localises to the mitochondrion inner membrane. It is found in the mitochondrion intermembrane space. The protein localises to the membrane raft. The protein resides in the cytoplasm. Its subcellular location is the cytoskeleton. Functionally, mitochondrial protein that probably regulates the biogenesis and the activity of mitochondria. Stimulates cardiolipin biosynthesis, binds cardiolipin-enriched membranes where it recruits and stabilizes some proteins including prohibitin and may therefore act in the organization of functional microdomains in mitochondrial membranes. Through regulation of the mitochondrial function may play a role into several biological processes including cell migration, cell proliferation, T-cell activation, calcium homeostasis and cellular response to stress. May play a role in calcium homeostasis through negative regulation of calcium efflux from mitochondria. Required for mitochondrial hyperfusion a pro-survival cellular response to stress which results in increased ATP production by mitochondria. May also regulate the organization of functional domains at the plasma membrane and play a role in T-cell activation through association with the T-cell receptor signaling complex and its regulation. The chain is Stomatin-like protein 2, mitochondrial (Stoml2) from Mus musculus (Mouse).